The chain runs to 433 residues: Glutamate-1-semialdehyde 2,1-aminomutase (433 aa).

Lys269 is modified (N6-(pyridoxal phosphate)lysine).

This sequence belongs to the class-III pyridoxal-phosphate-dependent aminotransferase family. HemL subfamily. As to quaternary structure, homodimer. Pyridoxal 5'-phosphate serves as cofactor.

The protein resides in the cytoplasm. The enzyme catalyses (S)-4-amino-5-oxopentanoate = 5-aminolevulinate. The protein operates within porphyrin-containing compound metabolism; protoporphyrin-IX biosynthesis; 5-aminolevulinate from L-glutamyl-tRNA(Glu): step 2/2. The protein is Glutamate-1-semialdehyde 2,1-aminomutase of Renibacterium salmoninarum (strain ATCC 33209 / DSM 20767 / JCM 11484 / NBRC 15589 / NCIMB 2235).